A 416-amino-acid polypeptide reads, in one-letter code: MTYIPKSDFMAVMMARGFMADCTDYQGLDEALLKGVQPAYIGFDATAKSLHVGSLIQIMMLRWFQKTGHKPLTLMGGGTTKVGDPSFRADERPLLGPEAIDDNIAGIKQVFSAYIDYSDAPTGALMLNNAEWLDNLNYLDFLRDIGRHFSINRMLSFESVKSRLDREQSLSFLEFNYMILQAYDFMELYRRYGCILQLGGSDQWGNIVNGIDLTRRVIDGEVYGLTSPLLTTSDGKKMGKSQSGAVWLNADMFSPYEFWQFWRNTTDADVGRFLKLYTELPLDECERLGALAGSEINAAKITLANEVTTLLHGAEAAATAAQTARDVFEKGGVGDDLPTLTLSAEDVAQGISIVQLIVKSGLANSGKEAKRLIAENGAKMDDAPLTNAGLMIDAAALQSPIKLSAGKKRHAMVQLG.

Tyrosine 40 contacts L-tyrosine. The 'HIGH' region motif lies at 45–54; that stretch reads ATAKSLHVGS. 2 residues coordinate L-tyrosine: tyrosine 177 and glutamine 181. Positions 237–241 match the 'KMSKS' region motif; it reads KMGKS. Lysine 240 contributes to the ATP binding site. The S4 RNA-binding domain maps to 351-415; the sequence is ISIVQLIVKS…GKKRHAMVQL (65 aa).

It belongs to the class-I aminoacyl-tRNA synthetase family. TyrS type 1 subfamily. Homodimer.

Its subcellular location is the cytoplasm. It carries out the reaction tRNA(Tyr) + L-tyrosine + ATP = L-tyrosyl-tRNA(Tyr) + AMP + diphosphate + H(+). Functionally, catalyzes the attachment of tyrosine to tRNA(Tyr) in a two-step reaction: tyrosine is first activated by ATP to form Tyr-AMP and then transferred to the acceptor end of tRNA(Tyr). The sequence is that of Tyrosine--tRNA ligase from Roseobacter denitrificans (strain ATCC 33942 / OCh 114) (Erythrobacter sp. (strain OCh 114)).